The following is a 113-amino-acid chain: Large ribosomal subunit protein bL19 (113 aa).

It belongs to the bacterial ribosomal protein bL19 family.

In terms of biological role, this protein is located at the 30S-50S ribosomal subunit interface and may play a role in the structure and function of the aminoacyl-tRNA binding site. This chain is Large ribosomal subunit protein bL19, found in Corynebacterium glutamicum (strain R).